A 299-amino-acid polypeptide reads, in one-letter code: Formin-like protein 12 (299 aa).

The 295-residue stretch at Met-1–Gln-295 folds into the FH2 domain.

It belongs to the formin-like family. Class-II subfamily.

The protein is Formin-like protein 12 (FH12) of Arabidopsis thaliana (Mouse-ear cress).